A 523-amino-acid polypeptide reads, in one-letter code: Probable 3-ketoacyl-CoA synthase 20 (523 aa).

Transmembrane regions (helical) follow at residues 31–55 (IVAVTALVAAAPRLSTLLAAAAAGG) and 78–96 (ALAVACWAAALAAYTYAAS). Positions 93-382 (YAASRPRPVY…RFLATVVLKR (290 aa)) constitute an FAE domain. Active-site residues include Cys237, His317, His401, His405, and Asn438.

The protein belongs to the thiolase-like superfamily. Chalcone/stilbene synthases family. As to expression, highly expressed in leaf sheaths. Expressed in leaves, flag leaves and panicles.

It localises to the membrane. It carries out the reaction a very-long-chain acyl-CoA + malonyl-CoA + H(+) = a very-long-chain 3-oxoacyl-CoA + CO2 + CoA. Contributes to fatty acids elongation. Plays a role in controlling leaf anatomy and plant architecture. The protein is Probable 3-ketoacyl-CoA synthase 20 of Oryza sativa subsp. japonica (Rice).